We begin with the raw amino-acid sequence, 176 residues long: Oleosin Ara h 14.0103 (176 aa).

Residue Ala2 is modified to N-acetylalanine; alternate. Transmembrane regions (helical) follow at residues 50 to 70 (IIAV…SGLS), 75 to 95 (IIGL…IVPA), and 96 to 116 (VVTI…GLTG). The interval 156 to 176 (KTKDAGQEIQTKAQDVKRSSS) is disordered.

This sequence belongs to the oleosin family. As to expression, expressed in seeds (at protein level).

Its subcellular location is the lipid droplet. It localises to the membrane. In terms of biological role, may have a structural role to stabilize the lipid body during desiccation of the seed by preventing coalescence of the oil. Probably interacts with both lipid and phospholipid moieties of lipid bodies. May also provide recognition signals for specific lipase anchorage in lipolysis during seedling growth. The chain is Oleosin Ara h 14.0103 from Arachis hypogaea (Peanut).